We begin with the raw amino-acid sequence, 165 residues long: Serine/threonine-protein phosphatase 2A 56 kDa regulatory subunit epsilon isoform (165 aa).

The tract at residues 1-41 (MSSAPTTPPSVDKVDGFSRKSVRKARQKRSQSSSQFRSQGK) is disordered. Ser-2 bears the N-acetylserine mark. The residue at position 7 (Thr-7) is a Phosphothreonine. A compositionally biased stretch (basic residues) spans 20–29 (KSVRKARQKR). Ser-30, Ser-32, and Ser-34 each carry phosphoserine. Residues 30–41 (SQSSSQFRSQGK) show a composition bias toward low complexity.

The protein belongs to the phosphatase 2A regulatory subunit B56 family. In terms of assembly, PP2A consists of a common heterodimeric core enzyme, composed of a 36 kDa catalytic subunit (subunit C) and a 65 kDa constant regulatory subunit (PR65 or subunit A), that associates with a variety of regulatory subunits. Proteins that associate with the core dimer include three families of regulatory subunits B (the R2/B/PR55/B55, R3/B''/PR72/PR130/PR59 and R5/B'/B56 families), the 48 kDa variable regulatory subunit, viral proteins, and cell signaling molecules. Interacts with SGO1. Found in a complex with at least ARL2, PPP2CB; PPP2R1A, PPP2R2A, PPP2R5E and TBCD. Highly expressed in testis, lung and brain.

It is found in the cytoplasm. Functionally, the B regulatory subunit might modulate substrate selectivity and catalytic activity, and might also direct the localization of the catalytic enzyme to a particular subcellular compartment. The polypeptide is Serine/threonine-protein phosphatase 2A 56 kDa regulatory subunit epsilon isoform (PPP2R5E) (Oryctolagus cuniculus (Rabbit)).